Here is a 210-residue protein sequence, read N- to C-terminus: MKTVPTLSFSKLGCSRGGRQLFQNIDCVLESGHWLYVAGANGVGKTSLLRMVCGLAPIESGEIFWNGTPIHAQADAYRQDLCYLGHLNALQESMTVHENLAFTAALGGMAPDMAQTQSVLAHFGVAGRDRQLVRHLSQGQKRRVALSRLALSQARLWVLDEPFVAMDEAGVRMLADLIAAHLTQGGLAVLTSHQQVDIGAIPAQLLELRA.

The region spanning 4 to 208 (VPTLSFSKLG…GAIPAQLLEL (205 aa)) is the ABC transporter domain. 39–46 (GANGVGKT) lines the ATP pocket.

This sequence belongs to the ABC transporter superfamily. CcmA exporter (TC 3.A.1.107) family. The complex is composed of two ATP-binding proteins (CcmA) and two transmembrane proteins (CcmB).

Its subcellular location is the cell inner membrane. The catalysed reaction is heme b(in) + ATP + H2O = heme b(out) + ADP + phosphate + H(+). Part of the ABC transporter complex CcmAB involved in the biogenesis of c-type cytochromes; once thought to export heme, this seems not to be the case, but its exact role is uncertain. Responsible for energy coupling to the transport system. The sequence is that of Cytochrome c biogenesis ATP-binding export protein CcmA from Albidiferax ferrireducens (strain ATCC BAA-621 / DSM 15236 / T118) (Rhodoferax ferrireducens).